The chain runs to 356 residues: C-C chemokine receptor type 8 (356 aa).

Topologically, residues 1 to 35 (MDYTLDPSMTTMTDYYYPDSLSSPCDGELIQRNDK) are extracellular. Residues 36-63 (LLLAVFYCLLFVFSLLGNSLVILVLVVC) form a helical membrane-spanning segment. Residues 64 to 73 (KKLRNITDIY) are Cytoplasmic-facing. A helical membrane pass occupies residues 74–93 (LLNLALSDLLFVFSFPFQTY). The Extracellular portion of the chain corresponds to 94-107 (YQLDQWVFGTVMCK). A disulfide bridge connects residues Cys106 and Cys184. The helical transmembrane segment at 108 to 129 (VVSGFYYIGFYSSMFFITLMSV) threads the bilayer. Over 130–146 (DRYLAVVHAVYAIKVRT) the chain is Cytoplasmic. A helical transmembrane segment spans residues 147–172 (IRMGTTTLSLLVWLTAIMATIPLLVF). The Extracellular portion of the chain corresponds to 173 to 203 (YQVASEDGVLQCYSFYNQQTLKWKIFTNFEM). The helical transmembrane segment at 204-223 (NILGLLIPFTIFMFCYIKIL) threads the bilayer. Residues 224–239 (HQLKRCQNHNKTKAIR) lie on the Cytoplasmic side of the membrane. The helical transmembrane segment at 240 to 264 (LVLIVVIASLLFWVPFNVVLFLTSL) threads the bilayer. The Extracellular segment spans residues 265 to 281 (HSMHILDGCSISQQLNY). Residues 282 to 305 (ATHVTEIISFTHCCVNPVIYAFVG) traverse the membrane as a helical segment. Topologically, residues 306 to 356 (EKFKKHLSEIFQKSCSHIFIYLGRQMPRESCEKSSSCQQHSFRSSSIDYIL) are cytoplasmic.

It belongs to the G-protein coupled receptor 1 family.

It localises to the cell membrane. Functionally, receptor for the chemokines CCL1/SCYA1/I-309. May regulate monocyte chemotaxis and thymic cell line apoptosis. The protein is C-C chemokine receptor type 8 (CCR8) of Macaca mulatta (Rhesus macaque).